Here is a 171-residue protein sequence, read N- to C-terminus: Lipoprotein signal peptidase (171 aa).

3 helical membrane passes run Ser8–Val28, Trp64–Leu84, and Ser96–Val118. Residues Asp120 and Asp138 contribute to the active site. Residues Val133–Phe153 traverse the membrane as a helical segment.

It belongs to the peptidase A8 family.

The protein resides in the cell inner membrane. The catalysed reaction is Release of signal peptides from bacterial membrane prolipoproteins. Hydrolyzes -Xaa-Yaa-Zaa-|-(S,diacylglyceryl)Cys-, in which Xaa is hydrophobic (preferably Leu), and Yaa (Ala or Ser) and Zaa (Gly or Ala) have small, neutral side chains.. It participates in protein modification; lipoprotein biosynthesis (signal peptide cleavage). In terms of biological role, this protein specifically catalyzes the removal of signal peptides from prolipoproteins. The chain is Lipoprotein signal peptidase from Haemophilus influenzae (strain 86-028NP).